Consider the following 214-residue polypeptide: Auxin-binding protein ABP20 (214 aa).

The signal sequence occupies residues Met1–Ala23. Residues Cys29 and Cys44 are joined by a disulfide bond. In terms of domain architecture, Cupin type-1 spans Ser58–Lys204. Asn65 carries an N-linked (GlcNAc...) asparagine glycan. His106, His108, Glu113, and His152 together coordinate Mn(2+).

Belongs to the germin family. Interacts with ABP19.

Its subcellular location is the secreted. The protein localises to the extracellular space. It is found in the apoplast. It localises to the cell wall. In terms of biological role, probable receptor for the plant growth-promoting hormone auxin. This Prunus persica (Peach) protein is Auxin-binding protein ABP20 (ABP20).